The following is a 78-amino-acid chain: Putative snRNP Sm-like protein (78 aa).

The 73-residue stretch at 4-76 (RPLDVIHRSL…VLAISPVDVG (73 aa)) folds into the Sm domain.

The protein belongs to the snRNP Sm proteins family.

This Thermococcus onnurineus (strain NA1) protein is Putative snRNP Sm-like protein.